A 423-amino-acid chain; its full sequence is MQYEDKNGVNEPSRRRLLKGIGALALAGSCPVAHAQKTQSAPGTLSPVARNEKQPFYGEHQAGILTPQQAAMMLVAFDVLASDKADLERLFRLLTQRFAFLTQGGAAPETPNPRLPPLDSGILGGYIAPDNLTITLSVGHSLFDERFGLAPQMPKKLQKMTRFPNDSLDAALCHGDVLLQICANTQDTVIHALRDIIKHTPDLLSVRWKREGFISDHAARSKGKETPINLLGFKDGTANPDSQNDKLMQKVVWVTADQQEPAWTIGGSYQAVRLIQFRVEFWDRTPLKEQQTIFGRDKQTGAPLGMQHEHDVPDYASDPEGKGIALDSHIRLANPRTAESESSLMLRRGYSYSLGVTNSGQLDMGLLFVCYQHDLEKGFLTVQKRLNGEALEEYVKPIGGGYFFALPGVKDANDYLGSALLRV.

The segment at residues 1 to 35 (MQYEDKNGVNEPSRRRLLKGIGALALAGSCPVAHA) is a signal peptide (tat-type signal). Heme b is bound by residues 236–238 (GTA), His-329, 334–336 (NPR), and Arg-347.

This sequence belongs to the DyP-type peroxidase family. EfeB subfamily. In terms of assembly, the heme-bound EfeB forms a homodimer whereas the apo-form mainly exists as a monomer. Part of a ferrous iron transporter composed of EfeU, EfeO and EfeB. The cofactor is heme b. Predicted to be exported by the Tat system. The position of the signal peptide cleavage has not been experimentally proven.

The protein resides in the periplasm. It catalyses the reaction heme b + 2 H(+) = protoporphyrin IX + Fe(2+). Involved in the recovery of exogenous heme iron. Extracts iron from heme while preserving the protoporphyrin ring intact. Also displays peroxidase activity on guaiacol and catechol in vitro. The deferrochelatase activity appears to be closely related to the peroxidation activity, but the link is unclear. The protein is Deferrochelatase (efeB) of Escherichia coli O157:H7.